Consider the following 348-residue polypeptide: Phosphoribosylformylglycinamidine cyclo-ligase (348 aa).

This sequence belongs to the AIR synthase family.

It is found in the cytoplasm. It catalyses the reaction 2-formamido-N(1)-(5-O-phospho-beta-D-ribosyl)acetamidine + ATP = 5-amino-1-(5-phospho-beta-D-ribosyl)imidazole + ADP + phosphate + H(+). It functions in the pathway purine metabolism; IMP biosynthesis via de novo pathway; 5-amino-1-(5-phospho-D-ribosyl)imidazole from N(2)-formyl-N(1)-(5-phospho-D-ribosyl)glycinamide: step 2/2. The sequence is that of Phosphoribosylformylglycinamidine cyclo-ligase from Geobacter sp. (strain M21).